A 146-amino-acid chain; its full sequence is Suppressor APC domain-containing protein 1 (146 aa).

A disordered region spans residues 121 to 146; the sequence is HRKGVTQSTGEVVSQAPPGPKGPTLV. Pro residues predominate over residues 137–146; that stretch reads PPGPKGPTLV.

This chain is Suppressor APC domain-containing protein 1 (Sapcd1), found in Mus musculus (Mouse).